The following is a 246-amino-acid chain: Octanoyltransferase (246 aa).

One can recognise a BPL/LPL catalytic domain in the interval 54–240 (DPPPEAVWLL…CLEPNADAAI (187 aa)). Residues 96–103 (RGGEVTHH), 163–165 (AIG), and 176–178 (GVA) each bind substrate. C194 acts as the Acyl-thioester intermediate in catalysis.

Belongs to the LipB family.

The protein localises to the cytoplasm. It carries out the reaction octanoyl-[ACP] + L-lysyl-[protein] = N(6)-octanoyl-L-lysyl-[protein] + holo-[ACP] + H(+). It functions in the pathway protein modification; protein lipoylation via endogenous pathway; protein N(6)-(lipoyl)lysine from octanoyl-[acyl-carrier-protein]: step 1/2. Catalyzes the transfer of endogenously produced octanoic acid from octanoyl-acyl-carrier-protein onto the lipoyl domains of lipoate-dependent enzymes. Lipoyl-ACP can also act as a substrate although octanoyl-ACP is likely to be the physiological substrate. The protein is Octanoyltransferase of Synechococcus sp. (strain WH7803).